Consider the following 249-residue polypeptide: MSFTVIIPARYQSTRLPGKPLADICGKPMIQWVYEQASKAGADRVIIATDDSRIEAVVKGFGGDVCMTSPNHESGTERLAEVIEKCGISADEIVVNVQGDEPLIPPSIIQQVAQNLSDSVAPMATLAVTIDEEDDVFNPNAVKVVTDAEGYALYFSRASIPWDRDAFAQGETLTANPLLRHIGIYAYRAGFINTYINWQPSVLEKIECLEQLRVLWYGEKIHVAVAKEAPAAGVDTPEDLEKVRAILSK.

Belongs to the KdsB family.

Its subcellular location is the cytoplasm. The catalysed reaction is 3-deoxy-alpha-D-manno-oct-2-ulosonate + CTP = CMP-3-deoxy-beta-D-manno-octulosonate + diphosphate. It functions in the pathway nucleotide-sugar biosynthesis; CMP-3-deoxy-D-manno-octulosonate biosynthesis; CMP-3-deoxy-D-manno-octulosonate from 3-deoxy-D-manno-octulosonate and CTP: step 1/1. Its pathway is bacterial outer membrane biogenesis; lipopolysaccharide biosynthesis. Functionally, activates KDO (a required 8-carbon sugar) for incorporation into bacterial lipopolysaccharide in Gram-negative bacteria. This chain is 3-deoxy-manno-octulosonate cytidylyltransferase, found in Aliivibrio fischeri (strain ATCC 700601 / ES114) (Vibrio fischeri).